Reading from the N-terminus, the 248-residue chain is 4-hydroxy-tetrahydrodipicolinate reductase (248 aa).

NAD(+) contacts are provided by residues D32, G74–T76, and S99–F102. The active-site Proton donor/acceptor is the H134. Residue H135 participates in (S)-2,3,4,5-tetrahydrodipicolinate binding. K138 serves as the catalytic Proton donor. (S)-2,3,4,5-tetrahydrodipicolinate is bound at residue G144 to T145.

Belongs to the DapB family.

Its subcellular location is the cytoplasm. It carries out the reaction (S)-2,3,4,5-tetrahydrodipicolinate + NAD(+) + H2O = (2S,4S)-4-hydroxy-2,3,4,5-tetrahydrodipicolinate + NADH + H(+). The catalysed reaction is (S)-2,3,4,5-tetrahydrodipicolinate + NADP(+) + H2O = (2S,4S)-4-hydroxy-2,3,4,5-tetrahydrodipicolinate + NADPH + H(+). The protein operates within amino-acid biosynthesis; L-lysine biosynthesis via DAP pathway; (S)-tetrahydrodipicolinate from L-aspartate: step 4/4. Its function is as follows. Catalyzes the conversion of 4-hydroxy-tetrahydrodipicolinate (HTPA) to tetrahydrodipicolinate. The polypeptide is 4-hydroxy-tetrahydrodipicolinate reductase (Chlorobium limicola (strain DSM 245 / NBRC 103803 / 6330)).